Consider the following 128-residue polypeptide: Calcitonin gene-related peptide 1 (128 aa).

The signal sequence occupies residues 1–25 (MGFLKFSPFLVVSILLLYQACGLQA). A propeptide spanning residues 26–80 (VPLRSTLESSPGMAATLSEEEARLLLAALVQNYMQMKVRELEQEQEAEGSSVTAQ) is cleaved from the precursor. Cysteine 84 and cysteine 89 form a disulfide bridge. The residue at position 119 (phenylalanine 119) is a Phenylalanine amide. Positions 125 to 128 (DLQA) are excised as a propeptide.

The protein belongs to the calcitonin family.

It localises to the secreted. In terms of biological role, CGRP1/CALCA is a peptide hormone that induces vasodilation mediated by the CALCRL-RAMP1 receptor complex. Dilates a variety of vessels including the coronary, cerebral and systemic vasculature. Its abundance in the CNS also points toward a neurotransmitter or neuromodulator role. It also elevates platelet cAMP. CGRP1 can also bind and activate CALCR-RAMP1 (AMYR1) receptor complex. This is Calcitonin gene-related peptide 1 from Rattus norvegicus (Rat).